The sequence spans 285 residues: Ret finger protein-like 4A (285 aa).

The segment at 11–53 (CYFCFRYLENPVYLNCGYICCFQCLDSLEKSPEGDGVLCPNCS) adopts an RING-type; degenerate zinc-finger fold. One can recognise a B30.2/SPRY domain in the interval 78 to 276 (EPQLNFILTM…ISICPVMNPS (199 aa)).

As to quaternary structure, interacts with PSMB1, UBE2A and CCNB1.

Its subcellular location is the cytoplasm. The protein localises to the nucleus. The polypeptide is Ret finger protein-like 4A (Rfpl4a) (Rattus norvegicus (Rat)).